A 336-amino-acid polypeptide reads, in one-letter code: Cell division protein ZipA (336 aa).

Over 1 to 2 the chain is Periplasmic; that stretch reads ME. Residues 3–23 form a helical membrane-spanning segment; it reads LHILFFILAGLLIAVLISFSL. The Cytoplasmic portion of the chain corresponds to 24–336; sequence WSARREKSRI…SRQSYLARVS (313 aa). The interval 56 to 77 is disordered; it reads PSLNPQSYAQTTGQHGETEADN. The segment covering 59–70 has biased composition (polar residues); sequence NPQSYAQTTGQH.

This sequence belongs to the ZipA family. As to quaternary structure, interacts with FtsZ via their C-terminal domains.

It localises to the cell inner membrane. In terms of biological role, essential cell division protein that stabilizes the FtsZ protofilaments by cross-linking them and that serves as a cytoplasmic membrane anchor for the Z ring. Also required for the recruitment to the septal ring of downstream cell division proteins. This Actinobacillus pleuropneumoniae serotype 3 (strain JL03) protein is Cell division protein ZipA.